Consider the following 424-residue polypeptide: Isovaleryl-CoA dehydrogenase, mitochondrial (424 aa).

The N-terminal 30 residues, methionine 1–alanine 30, are a transit peptide targeting the mitochondrion. Lysine 56, lysine 65, and lysine 76 each carry N6-acetyllysine; alternate. N6-succinyllysine; alternate occurs at positions 56, 65, and 76. Residues leucine 163 to serine 172 and tryptophan 196 to threonine 198 contribute to the FAD site. Serine 172 is a binding site for substrate. Serine 220–arginine 221 provides a ligand contact to substrate. Position 239 is an N6-acetyllysine (lysine 239). Residue lysine 260 is modified to N6-acetyllysine; alternate. Lysine 260 carries the post-translational modification N6-succinyllysine; alternate. Residues tyrosine 275 and aspartate 282–arginine 285 each bind substrate. The Proton acceptor role is filled by glutamate 284. Arginine 310 lines the FAD pocket. Lysine 316 bears the N6-succinyllysine mark. FAD-binding positions include glutamine 321 and glutamine 378–glycine 382. Glycine 405 to glycine 406 serves as a coordination point for substrate. Threonine 407–glutamate 409 lines the FAD pocket.

It belongs to the acyl-CoA dehydrogenase family. Homotetramer. It depends on FAD as a cofactor.

It is found in the mitochondrion matrix. The catalysed reaction is 3-methylbutanoyl-CoA + oxidized [electron-transfer flavoprotein] + H(+) = 3-methylbut-2-enoyl-CoA + reduced [electron-transfer flavoprotein]. The enzyme catalyses pentanoyl-CoA + oxidized [electron-transfer flavoprotein] + H(+) = (2E)-pentenoyl-CoA + reduced [electron-transfer flavoprotein]. It carries out the reaction hexanoyl-CoA + oxidized [electron-transfer flavoprotein] + H(+) = (2E)-hexenoyl-CoA + reduced [electron-transfer flavoprotein]. It catalyses the reaction butanoyl-CoA + oxidized [electron-transfer flavoprotein] + H(+) = (2E)-butenoyl-CoA + reduced [electron-transfer flavoprotein]. Its pathway is amino-acid degradation; L-leucine degradation; (S)-3-hydroxy-3-methylglutaryl-CoA from 3-isovaleryl-CoA: step 1/3. Functionally, catalyzes the conversion of isovaleryl-CoA/3-methylbutanoyl-CoA to 3-methylbut-2-enoyl-CoA as an intermediate step in the leucine (Leu) catabolic pathway. To a lesser extent, is also able to catalyze the oxidation of other saturated short-chain acyl-CoA thioesters as pentanoyl-CoA, hexenoyl-CoA and butenoyl-CoA. This is Isovaleryl-CoA dehydrogenase, mitochondrial (Ivd) from Rattus norvegicus (Rat).